A 432-amino-acid chain; its full sequence is D-amino acid dehydrogenase 1 (432 aa).

3 to 17 (VLILGSGVVGTVSAY) serves as a coordination point for FAD.

Belongs to the DadA oxidoreductase family. FAD serves as cofactor.

It catalyses the reaction a D-alpha-amino acid + A + H2O = a 2-oxocarboxylate + AH2 + NH4(+). In terms of biological role, oxidative deamination of D-amino acids. The chain is D-amino acid dehydrogenase 1 (dadA1) from Pseudomonas putida (strain ATCC 47054 / DSM 6125 / CFBP 8728 / NCIMB 11950 / KT2440).